An 823-amino-acid polypeptide reads, in one-letter code: Putative ankyrin repeat domain-containing protein 20A3 (823 aa).

ANK repeat units lie at residues 66–95 (QHRT…QIDV), 99–128 (ENRT…NPNL), 132–161 (YGNT…HIEA), 165–194 (DNNT…SSHA), and 198–227 (LRRS…DVFA). Disordered regions lie at residues 301–343 (VPEK…EVED) and 355–402 (VQTL…LSEN). Residues 372–384 (QERHERSEKKQPQ) are compositionally biased toward basic and acidic residues. Coiled-coil stretches lie at residues 431-480 (KKLK…KQLE), 571-724 (AFRY…NNST), and 776-805 (LVLE…EKTE).

This Homo sapiens (Human) protein is Putative ankyrin repeat domain-containing protein 20A3.